A 717-amino-acid polypeptide reads, in one-letter code: Fatty acid oxidation complex subunit alpha (717 aa).

The tract at residues 1–190 (MESTSAFNLQ…KAGLVDDVVP (190 aa)) is enoyl-CoA hydratase. The interval 306-717 (RALHSVGVLG…AGNLQAEMTV (412 aa)) is 3-hydroxyacyl-CoA dehydrogenase.

The protein in the N-terminal section; belongs to the enoyl-CoA hydratase/isomerase family. This sequence in the central section; belongs to the 3-hydroxyacyl-CoA dehydrogenase family. In terms of assembly, heterotetramer of two alpha chains (FadJ) and two beta chains (FadI).

Its subcellular location is the cytoplasm. The enzyme catalyses a (3S)-3-hydroxyacyl-CoA = a (2E)-enoyl-CoA + H2O. It catalyses the reaction a 4-saturated-(3S)-3-hydroxyacyl-CoA = a (3E)-enoyl-CoA + H2O. The catalysed reaction is a (3S)-3-hydroxyacyl-CoA + NAD(+) = a 3-oxoacyl-CoA + NADH + H(+). It carries out the reaction (3S)-3-hydroxybutanoyl-CoA = (3R)-3-hydroxybutanoyl-CoA. The protein operates within lipid metabolism; fatty acid beta-oxidation. Catalyzes the formation of a hydroxyacyl-CoA by addition of water on enoyl-CoA. Also exhibits 3-hydroxyacyl-CoA epimerase and 3-hydroxyacyl-CoA dehydrogenase activities. This is Fatty acid oxidation complex subunit alpha from Cronobacter sakazakii (strain ATCC BAA-894) (Enterobacter sakazakii).